Consider the following 343-residue polypeptide: Sodium/bile acid cotransporter 7-A (343 aa).

Topologically, residues 1-10 are cytoplasmic; it reads MGLLERLRKE. Residues 11-31 traverse the membrane as a helical segment; that stretch reads WFIVGIILVIAAAKLEPTVGV. Residues 32-37 lie on the Extracellular side of the membrane; it reads KGGPLK. A helical transmembrane segment spans residues 38 to 58; the sequence is PEITITYIAVSAIFFNSGLSL. Residues 59 to 71 lie on the Cytoplasmic side of the membrane; the sequence is KTEELTNALMHVK. A helical transmembrane segment spans residues 72–92; the sequence is LHLFVQLFTLVFFPTAIWLFL. Residues 93 to 116 lie on the Extracellular side of the membrane; that stretch reads QVLSLTPINEWLLKGLQTVSCMPP. The chain crosses the membrane as a helical span at residues 117–137; that stretch reads PVSSAVILTKAVGGNEAAAIF. Residue asparagine 138 is a topological domain, cytoplasmic. A helical transmembrane segment spans residues 139-159; the sequence is SAFGSFLGIVVTPLLLLLFLG. The Extracellular portion of the chain corresponds to 160–163; the sequence is SSSS. A helical transmembrane segment spans residues 164-184; sequence VPFTSIFSQLFMTVVVPLIIG. At 185-201 the chain is on the cytoplasmic side; it reads QIVRRYIKDWLERKKPP. A helical transmembrane segment spans residues 202 to 222; that stretch reads FGAISSCVLLMIIYTTFCDTF. Topologically, residues 223-234 are extracellular; it reads SNPNIDLDTFSL. A helical transmembrane segment spans residues 235–255; that stretch reads VVIVFIIFFIQLAFMLLTFLF. The Cytoplasmic segment spans residues 256-270; it reads STSKNSGFTPADTVA. Residues 271–291 form a helical membrane-spanning segment; that stretch reads IVFCSTHKSLTLGIPMLKIVF. Over 292–298 the chain is Extracellular; it reads VGYEHLS. Residues 299–319 traverse the membrane as a helical segment; the sequence is LISVPLLIYHPAQILLGSVLV. The Cytoplasmic portion of the chain corresponds to 320-343; sequence PTIKSWMLSRQKALKLTRQPKIPL.

It belongs to the bile acid:sodium symporter (BASS) (TC 2.A.28) family. In terms of tissue distribution, strongly expressed in small intestine. Moderately expressed in spleen. Weakly expressed in skeletal muscle. Not detected in other tissues tested.

It is found in the cell membrane. Its subcellular location is the endoplasmic reticulum membrane. The protein resides in the golgi apparatus membrane. Its function is as follows. Involved in teeth and skeletal development. Has an essential role in the biosynthesis and trafficking of glycosaminoglycans and glycoproteins to produce a proper functioning extracellular matrix. Required for extracellular matrix mineralization. Also involved in the regulation of cellular calcium homeostasis. Does not show transport activity towards bile acids or steroid sulfates. This is Sodium/bile acid cotransporter 7-A (slc10a7-a) from Xenopus laevis (African clawed frog).